The primary structure comprises 309 residues: Lipoyl synthase (309 aa).

Positions 56, 61, 67, 82, 86, 89, and 296 each coordinate [4Fe-4S] cluster. The Radical SAM core domain maps to 68–285 (FKRGTATFMI…RVAGLKMGFS (218 aa)).

It belongs to the radical SAM superfamily. Lipoyl synthase family. [4Fe-4S] cluster serves as cofactor.

The protein resides in the cytoplasm. The enzyme catalyses [[Fe-S] cluster scaffold protein carrying a second [4Fe-4S](2+) cluster] + N(6)-octanoyl-L-lysyl-[protein] + 2 oxidized [2Fe-2S]-[ferredoxin] + 2 S-adenosyl-L-methionine + 4 H(+) = [[Fe-S] cluster scaffold protein] + N(6)-[(R)-dihydrolipoyl]-L-lysyl-[protein] + 4 Fe(3+) + 2 hydrogen sulfide + 2 5'-deoxyadenosine + 2 L-methionine + 2 reduced [2Fe-2S]-[ferredoxin]. Its pathway is protein modification; protein lipoylation via endogenous pathway; protein N(6)-(lipoyl)lysine from octanoyl-[acyl-carrier-protein]: step 2/2. Functionally, catalyzes the radical-mediated insertion of two sulfur atoms into the C-6 and C-8 positions of the octanoyl moiety bound to the lipoyl domains of lipoate-dependent enzymes, thereby converting the octanoylated domains into lipoylated derivatives. The protein is Lipoyl synthase of Syntrophotalea carbinolica (strain DSM 2380 / NBRC 103641 / GraBd1) (Pelobacter carbinolicus).